The chain runs to 34 residues: Photosystem II reaction center protein Psb30 (34 aa).

The chain crosses the membrane as a helical span at residues 6–26 (VIGQLIATGAIMLAGPAVIVL).

It belongs to the Psb30/Ycf12 family. As to quaternary structure, PSII is composed of 1 copy each of membrane proteins PsbA, PsbB, PsbC, PsbD, PsbE, PsbF, PsbH, PsbI, PsbJ, PsbK, PsbL, PsbM, PsbT, PsbX, PsbY, PsbZ, Psb30/Ycf12, peripheral proteins of the oxygen-evolving complex and a large number of cofactors. It forms dimeric complexes.

The protein resides in the plastid. It is found in the chloroplast thylakoid membrane. Its function is as follows. A core subunit of photosystem II (PSII), probably helps stabilize the reaction center. The sequence is that of Photosystem II reaction center protein Psb30 from Trieres chinensis (Marine centric diatom).